The sequence spans 187 residues: Pyridoxal 5'-phosphate synthase subunit PdxT (187 aa).

Gly47–Ser49 is an L-glutamine binding site. Cys76 acts as the Nucleophile in catalysis. L-glutamine contacts are provided by residues Arg102 and Ile128–Arg129. Residues His165 and Glu167 each act as charge relay system in the active site.

Belongs to the glutaminase PdxT/SNO family. As to quaternary structure, in the presence of PdxS, forms a dodecamer of heterodimers. Only shows activity in the heterodimer.

The catalysed reaction is aldehydo-D-ribose 5-phosphate + D-glyceraldehyde 3-phosphate + L-glutamine = pyridoxal 5'-phosphate + L-glutamate + phosphate + 3 H2O + H(+). It carries out the reaction L-glutamine + H2O = L-glutamate + NH4(+). Its pathway is cofactor biosynthesis; pyridoxal 5'-phosphate biosynthesis. Its function is as follows. Catalyzes the hydrolysis of glutamine to glutamate and ammonia as part of the biosynthesis of pyridoxal 5'-phosphate. The resulting ammonia molecule is channeled to the active site of PdxS. This chain is Pyridoxal 5'-phosphate synthase subunit PdxT, found in Methanococcus maripaludis (strain DSM 14266 / JCM 13030 / NBRC 101832 / S2 / LL).